The chain runs to 188 residues: Adenylate kinase (188 aa).

11–16 serves as a coordination point for ATP; the sequence is GAGKGT. An NMP region spans residues 31-60; that stretch reads STGDIFRANIKDQTELGREAQRYTDAGNLV. AMP-binding positions include Thr32, Arg37, 58-60, 86-89, and Gln93; these read NLV and GYPR. The LID stretch occupies residues 127 to 137; sequence GRAQEQGRTDD. Arg128 serves as a coordination point for ATP. The AMP site is built by Arg134 and Arg145. Residue Gly173 coordinates ATP.

Belongs to the adenylate kinase family. Monomer.

The protein localises to the cytoplasm. It carries out the reaction AMP + ATP = 2 ADP. It functions in the pathway purine metabolism; AMP biosynthesis via salvage pathway; AMP from ADP: step 1/1. Catalyzes the reversible transfer of the terminal phosphate group between ATP and AMP. Plays an important role in cellular energy homeostasis and in adenine nucleotide metabolism. This is Adenylate kinase from Kocuria rhizophila (strain ATCC 9341 / DSM 348 / NBRC 103217 / DC2201).